Here is a 439-residue protein sequence, read N- to C-terminus: Histidinol dehydrogenase (439 aa).

NAD(+)-binding residues include tyrosine 129, glutamine 193, and asparagine 222. Substrate is bound by residues threonine 245, glutamine 267, and histidine 270. Positions 267 and 270 each coordinate Zn(2+). Residues glutamate 336 and histidine 337 each act as proton acceptor in the active site. Positions 337, 370, 424, and 429 each coordinate substrate. Aspartate 370 contributes to the Zn(2+) binding site. Histidine 429 serves as a coordination point for Zn(2+).

Belongs to the histidinol dehydrogenase family. It depends on Zn(2+) as a cofactor.

The catalysed reaction is L-histidinol + 2 NAD(+) + H2O = L-histidine + 2 NADH + 3 H(+). Its pathway is amino-acid biosynthesis; L-histidine biosynthesis; L-histidine from 5-phospho-alpha-D-ribose 1-diphosphate: step 9/9. In terms of biological role, catalyzes the sequential NAD-dependent oxidations of L-histidinol to L-histidinaldehyde and then to L-histidine. In Cutibacterium acnes (strain DSM 16379 / KPA171202) (Propionibacterium acnes), this protein is Histidinol dehydrogenase.